The sequence spans 220 residues: Sec-independent protein translocase protein TatB (220 aa).

Residues 1–21 (MFDIGFSELLLVLVIGLVVLG) traverse the membrane as a helical segment. Residues 192-220 (KQQIDTIDSHGTDLSSAGPSRIHQPGGDQ) are disordered.

It belongs to the TatB family. In terms of assembly, the Tat system comprises two distinct complexes: a TatABC complex, containing multiple copies of TatA, TatB and TatC subunits, and a separate TatA complex, containing only TatA subunits. Substrates initially bind to the TatABC complex, which probably triggers association of the separate TatA complex to form the active translocon.

It is found in the cell inner membrane. In terms of biological role, part of the twin-arginine translocation (Tat) system that transports large folded proteins containing a characteristic twin-arginine motif in their signal peptide across membranes. Together with TatC, TatB is part of a receptor directly interacting with Tat signal peptides. TatB may form an oligomeric binding site that transiently accommodates folded Tat precursor proteins before their translocation. This is Sec-independent protein translocase protein TatB from Yersinia pestis bv. Antiqua (strain Antiqua).